Consider the following 68-residue polypeptide: Sec-independent protein translocase protein TatA (68 aa).

Residues 1–21 (MGSFSIWHWLIVLAVVLLLFG) traverse the membrane as a helical segment. Residues 42-68 (GMGDDEVASADKSVDGKTVDHKSDEVR) form a disordered region. Basic and acidic residues predominate over residues 53 to 68 (KSVDGKTVDHKSDEVR).

Belongs to the TatA/E family. As to quaternary structure, the Tat system comprises two distinct complexes: a TatABC complex, containing multiple copies of TatA, TatB and TatC subunits, and a separate TatA complex, containing only TatA subunits. Substrates initially bind to the TatABC complex, which probably triggers association of the separate TatA complex to form the active translocon.

It localises to the cell inner membrane. In terms of biological role, part of the twin-arginine translocation (Tat) system that transports large folded proteins containing a characteristic twin-arginine motif in their signal peptide across membranes. TatA could form the protein-conducting channel of the Tat system. In Rhizobium meliloti (strain 1021) (Ensifer meliloti), this protein is Sec-independent protein translocase protein TatA.